The sequence spans 304 residues: MFGRVAVLLGGTSAEREVSLLSGRNVLEVLRMRGVDAQSVDGVPALAQALVERRFDRVFNVLHGHNGGGEDGVVQGLMQAFGVPYTGSDVLGSALSMDKVRTKQVWLALGLPTPRYASLSVCATAVEVRKAVEMLGFPVIIKPAKEGSSVGVSRVFALEHLEEAVALAARYEGELLMEQLIEGDELTVSILDEMALPSIRIVPQGQWYDYNAKYLAEDTQYVCPGLDDVAEAEIAQLALAAFHSVGCRGWGRVDVMRERGSGRFFLLEVNTAPGMTTHSLVPKAASQLGMGFDDLVWRILEQTL.

The ATP-grasp domain occupies 103–301 (KQVWLALGLP…FDDLVWRILE (199 aa)). Residue 132 to 187 (VEMLGFPVIIKPAKEGSSVGVSRVFALEHLEEAVALAARYEGELLMEQLIEGDELT) participates in ATP binding. 3 residues coordinate Mg(2+): Asp-254, Glu-268, and Asn-270.

It belongs to the D-alanine--D-alanine ligase family. Requires Mg(2+) as cofactor. The cofactor is Mn(2+).

Its subcellular location is the cytoplasm. It carries out the reaction 2 D-alanine + ATP = D-alanyl-D-alanine + ADP + phosphate + H(+). It functions in the pathway cell wall biogenesis; peptidoglycan biosynthesis. Functionally, cell wall formation. The sequence is that of D-alanine--D-alanine ligase from Xylella fastidiosa (strain Temecula1 / ATCC 700964).